Here is a 399-residue protein sequence, read N- to C-terminus: DJ-1 protein homolog F (399 aa).

PfpI endopeptidase domains lie at 7 to 199 and 211 to 394; these read KSVL…ESLG and TSLL…TALG.

The protein belongs to the peptidase C56 family. As to quaternary structure, homotrimer.

May be involved in oxidative stress response. This is DJ-1 protein homolog F (DJ1F) from Arabidopsis thaliana (Mouse-ear cress).